A 1353-amino-acid polypeptide reads, in one-letter code: Trifunctional purine biosynthetic protein adenosine-3 (1353 aa).

One can recognise an ATP-grasp domain in the interval 114–321 (KDFMLRHGIP…LFDVMEACCS (208 aa)). Residues 193–196 (EELL), glutamate 200, arginine 223, and asparagine 232 contribute to the ATP site. Positions 291 and 293 each coordinate Mg(2+). An AIRS domain region spans residues 441-1155 (GLSYKDSGVD…QKMLSQRRKR (715 aa)). A phosphoserine mark is found at serine 814 and serine 816. The tract at residues 1153–1353 (RKRVAVLISG…ALISPEVSSQ (201 aa)) is GART domain. Residue 1164 to 1166 (GSN) participates in N(1)-(5-phospho-beta-D-ribosyl)glycinamide binding. (6R)-10-formyltetrahydrofolate is bound by residues arginine 1219, 1244–1247 (MRVL), and asparagine 1261. Residue histidine 1263 is the Proton donor of the active site. 1295-1299 (DEGVD) is a binding site for (6R)-10-formyltetrahydrofolate. 1325–1328 (HKAE) contacts N(1)-(5-phospho-beta-D-ribosyl)glycinamide.

It in the N-terminal section; belongs to the GARS family. This sequence in the central section; belongs to the AIR synthase family. The protein in the C-terminal section; belongs to the GART family. In terms of assembly, homodimer. The cofactor is Mg(2+). It depends on Mn(2+) as a cofactor.

It catalyses the reaction 5-phospho-beta-D-ribosylamine + glycine + ATP = N(1)-(5-phospho-beta-D-ribosyl)glycinamide + ADP + phosphate + H(+). It carries out the reaction 2-formamido-N(1)-(5-O-phospho-beta-D-ribosyl)acetamidine + ATP = 5-amino-1-(5-phospho-beta-D-ribosyl)imidazole + ADP + phosphate + H(+). The enzyme catalyses N(1)-(5-phospho-beta-D-ribosyl)glycinamide + (6R)-10-formyltetrahydrofolate = N(2)-formyl-N(1)-(5-phospho-beta-D-ribosyl)glycinamide + (6S)-5,6,7,8-tetrahydrofolate + H(+). The protein operates within purine metabolism; IMP biosynthesis via de novo pathway; 5-amino-1-(5-phospho-D-ribosyl)imidazole from N(2)-formyl-N(1)-(5-phospho-D-ribosyl)glycinamide: step 2/2. It functions in the pathway purine metabolism; IMP biosynthesis via de novo pathway; N(1)-(5-phospho-D-ribosyl)glycinamide from 5-phospho-alpha-D-ribose 1-diphosphate: step 2/2. It participates in purine metabolism; IMP biosynthesis via de novo pathway; N(2)-formyl-N(1)-(5-phospho-D-ribosyl)glycinamide from N(1)-(5-phospho-D-ribosyl)glycinamide (10-formyl THF route): step 1/1. Trifunctional enzyme that catalyzes three distinct reactions as part of the 'de novo' inosine monophosphate biosynthetic pathway. This is Trifunctional purine biosynthetic protein adenosine-3 from Drosophila melanogaster (Fruit fly).